The following is a 394-amino-acid chain: Galactose-3-O-sulfotransferase 2 (394 aa).

Residues 1-8 lie on the Cytoplasmic side of the membrane; sequence MWGSQHRS. The helical; Signal-anchor for type II membrane protein transmembrane segment at 9-29 threads the bilayer; it reads FQVALWFLVLAVFLLVGFLHV. Residues 30 to 394 are Lumenal-facing; it reads DFRLLIPDKV…TPKDIPFLKK (365 aa). Asparagine 72, asparagine 176, asparagine 284, and asparagine 326 each carry an N-linked (GlcNAc...) asparagine glycan.

Belongs to the galactose-3-O-sulfotransferase family.

It localises to the golgi apparatus. It is found in the golgi stack membrane. It functions in the pathway protein modification; carbohydrate sulfation. With respect to regulation, strongly inhibited by Cu(2+) and Zn(2+). Transfers a sulfate group to the hydroxyl group at C3 of non-reducing beta-galactosyl residues. Acts both on type 1 (Gal-beta-1,3-GlcNAc) and type 2 (Gal-beta-1,4-GlcNAc) chains with similar efficiency. The polypeptide is Galactose-3-O-sulfotransferase 2 (Gal3st2) (Mus musculus (Mouse)).